Here is a 413-residue protein sequence, read N- to C-terminus: Eukaryotic initiation factor 4A-10 (413 aa).

A Q motif motif is present at residues 40 to 68 (DSFDAMGLQENLLRGIYAYGFEKPSAIQQ). The 171-residue stretch at 71–241 (IVPFCKGLDV…RKFMNKPVRI (171 aa)) folds into the Helicase ATP-binding domain. ATP is bound at residue 84 to 91 (AQSGTGKT). The DEAD box motif lies at 189–192 (DEAD). The 162-residue stretch at 252-413 (GIKQFYVNVD…ELPANVADLL (162 aa)) folds into the Helicase C-terminal domain.

The protein belongs to the DEAD box helicase family. eIF4A subfamily. In terms of assembly, eIF4F is a multi-subunit complex, the composition of which varies with external and internal environmental conditions. It is composed of at least EIF4A, EIF4E and EIF4G.

The catalysed reaction is ATP + H2O = ADP + phosphate + H(+). Functionally, ATP-dependent RNA helicase which is a subunit of the eIF4F complex involved in cap recognition and is required for mRNA binding to ribosome. In the current model of translation initiation, eIF4A unwinds RNA secondary structures in the 5'-UTR of mRNAs which is necessary to allow efficient binding of the small ribosomal subunit, and subsequent scanning for the initiator codon. The sequence is that of Eukaryotic initiation factor 4A-10 from Nicotiana tabacum (Common tobacco).